We begin with the raw amino-acid sequence, 47 residues long: Defensin-like protein 2 (47 aa).

Disulfide bonds link C5/C47, C16/C36, C22/C43, and C26/C45.

The protein belongs to the DEFL family.

Fabatins have antibacterial activity against Gram-positive and Gram-negative bacteria. High activity against P.aeruginosa. No activity against S.cerevisiae and C.albicans. In Vicia faba (Broad bean), this protein is Defensin-like protein 2.